We begin with the raw amino-acid sequence, 334 residues long: Ferrochelatase 1 (334 aa).

Fe cation-binding residues include His201 and Glu282.

The protein belongs to the ferrochelatase family.

The protein localises to the cytoplasm. It carries out the reaction heme b + 2 H(+) = protoporphyrin IX + Fe(2+). It participates in porphyrin-containing compound metabolism; protoheme biosynthesis; protoheme from protoporphyrin-IX: step 1/1. Its function is as follows. Catalyzes the ferrous insertion into protoporphyrin IX. The chain is Ferrochelatase 1 from Shewanella oneidensis (strain ATCC 700550 / JCM 31522 / CIP 106686 / LMG 19005 / NCIMB 14063 / MR-1).